The chain runs to 109 residues: uncharacterized protein (109 aa).

The chain crosses the membrane as a helical span at residues 82-102 (SLSFLLLLFFYFNNYYFLSMT).

It localises to the membrane. This is an uncharacterized protein from Saccharomyces cerevisiae (strain ATCC 204508 / S288c) (Baker's yeast).